The following is a 322-amino-acid chain: Aspartate--ammonia ligase (322 aa).

The protein belongs to the class-II aminoacyl-tRNA synthetase family. AsnA subfamily.

The protein resides in the cytoplasm. The enzyme catalyses L-aspartate + NH4(+) + ATP = L-asparagine + AMP + diphosphate + H(+). The protein operates within amino-acid biosynthesis; L-asparagine biosynthesis; L-asparagine from L-aspartate (ammonia route): step 1/1. The sequence is that of Aspartate--ammonia ligase from Lactiplantibacillus plantarum (strain ATCC BAA-793 / NCIMB 8826 / WCFS1) (Lactobacillus plantarum).